Here is a 123-residue protein sequence, read N- to C-terminus: Holo-[acyl-carrier-protein] synthase (123 aa).

Mg(2+)-binding residues include Asp-8 and Glu-56.

The protein belongs to the P-Pant transferase superfamily. AcpS family. Mg(2+) serves as cofactor.

The protein resides in the cytoplasm. It catalyses the reaction apo-[ACP] + CoA = holo-[ACP] + adenosine 3',5'-bisphosphate + H(+). In terms of biological role, transfers the 4'-phosphopantetheine moiety from coenzyme A to a Ser of acyl-carrier-protein. This chain is Holo-[acyl-carrier-protein] synthase, found in Treponema denticola (strain ATCC 35405 / DSM 14222 / CIP 103919 / JCM 8153 / KCTC 15104).